The following is a 777-amino-acid chain: Acyl-CoA dehydrogenase family member 11 (777 aa).

FAD is bound by residues 501–511, 509–511, 535–537, and Ser-537; these read FCMTEPDVASS, ASS, and WSS. Substrate is bound at residue Ser-511. 626 to 629 is a binding site for substrate; that stretch reads GPGR. FAD-binding positions include Arg-654, Gln-724, and 724–728; that span reads QVCGG. Gly-752 provides a ligand contact to substrate. FAD-binding positions include 753-755 and Glu-755; that span reads PDE.

Belongs to the acyl-CoA dehydrogenase family. As to quaternary structure, homodimer. FAD is required as a cofactor.

It localises to the peroxisome. The protein resides in the mitochondrion membrane. It catalyses the reaction a 2,3-saturated acyl-CoA + oxidized [electron-transfer flavoprotein] + H(+) = a (2E)-enoyl-CoA + reduced [electron-transfer flavoprotein]. The enzyme catalyses docosanoyl-CoA + oxidized [electron-transfer flavoprotein] + H(+) = (2E)-docosenoyl-CoA + reduced [electron-transfer flavoprotein]. It carries out the reaction tetracosanoyl-CoA + oxidized [electron-transfer flavoprotein] + H(+) = (2E)-tetracosenoyl-CoA + reduced [electron-transfer flavoprotein]. The catalysed reaction is eicosanoyl-CoA + oxidized [electron-transfer flavoprotein] + H(+) = (2E)-eicosenoyl-CoA + reduced [electron-transfer flavoprotein]. It catalyses the reaction hexacosanoyl-CoA + oxidized [electron-transfer flavoprotein] + H(+) = (2E)-hexacosenoyl-CoA + reduced [electron-transfer flavoprotein]. The enzyme catalyses tricosanoyl-CoA + oxidized [electron-transfer flavoprotein] + H(+) = (2E)-tricosenoyl-CoA + reduced [electron-transfer flavoprotein]. Its pathway is lipid metabolism; fatty acid beta-oxidation. Its function is as follows. Acyl-CoA dehydrogenase, that exhibits maximal activity towards saturated C22-CoA. Probably participates in beta-oxydation and energy production but could also play a role in the metabolism of specific fatty acids to control fatty acids composition of cellular lipids in brain. This Gallus gallus (Chicken) protein is Acyl-CoA dehydrogenase family member 11 (ACAD11).